Here is an 80-residue protein sequence, read N- to C-terminus: uncharacterized protein (80 aa).

An N-terminal signal peptide occupies residues 1–20 (MVAADHRALGSNKSYPASQT). The segment at 1 to 21 (MVAADHRALGSNKSYPASQTA) is disordered. Residues 11 to 21 (SNKSYPASQTA) are compositionally biased toward polar residues.

This is an uncharacterized protein from Mycobacterium tuberculosis (strain CDC 1551 / Oshkosh).